The following is a 593-amino-acid chain: Solute carrier family 13 member 2 (593 aa).

A run of 4 helical transmembrane segments spans residues 11 to 31 (YRMY…PILV), 53 to 73 (ALPL…MGIM), 86 to 106 (TNVL…WNLH), and 121 to 141 (PALL…WISN). Residues 164–184 (SNVEEGSDNPTFELQEPSPQK) are compositionally biased toward polar residues. Positions 164–204 (SNVEEGSDNPTFELQEPSPQKETSKVDEKDNGQAQPLPAVP) are disordered. Over residues 185-194 (ETSKVDEKDN) the composition is skewed to basic and acidic residues. 8 helical membrane passes run 221–241 (GMSL…LTGT), 270–290 (FAFP…QILF), 327–347 (PMSF…LLWF), 369–389 (VMVS…MVPS), 451–471 (LMPL…LLVA), 485–505 (LLLP…LYVM), 514–534 (LAFM…FGGL), and 543–563 (GIML…SWGV).

The protein belongs to the SLC13A/DASS transporter (TC 2.A.47) family. NADC subfamily. In terms of tissue distribution, abundant in kidney and small intestine.

It localises to the apical cell membrane. The catalysed reaction is succinate(out) + 3 Na(+)(out) = succinate(in) + 3 Na(+)(in). It carries out the reaction fumarate(out) + 3 Na(+)(out) = fumarate(in) + 3 Na(+)(in). The enzyme catalyses 2-oxoglutarate(out) + 3 Na(+)(out) = 2-oxoglutarate(in) + 3 Na(+)(in). Li(+) decreases succinate transport in the presence of Na(+), by competing at one of the three cation binding sites. Low-affinity sodium-dicarboxylate cotransporter, that mediates the entry of citric acid cycle intermediates, such as succinate, citrate, fumarate and alpha-ketoglutarate (2-oxoglutarate) into the small intestine and renal proximal tubule. Transports the dicarboxylate into the cell with a probable stoichiometry of 3 Na(+) for 1 divalent dicarboxylate, rendering the process electrogenic. Citrate is transported in protonated form as a divalent anion, rather than the trivalent form which is normally found in blood. Has a critical role in renal dicarboxylate transport. This Oryctolagus cuniculus (Rabbit) protein is Solute carrier family 13 member 2 (SLC13A2).